Here is a 443-residue protein sequence, read N- to C-terminus: Signal recognition particle 54 kDa protein (443 aa).

GTP is bound by residues 107-114 (GVQGSGKT), 189-193 (DTAGR), and 247-250 (TKLD).

The protein belongs to the GTP-binding SRP family. SRP54 subfamily. As to quaternary structure, part of the signal recognition particle protein translocation system, which is composed of SRP and FtsY. Archaeal SRP consists of a 7S RNA molecule of 300 nucleotides and two protein subunits: SRP54 and SRP19.

The protein localises to the cytoplasm. It catalyses the reaction GTP + H2O = GDP + phosphate + H(+). Involved in targeting and insertion of nascent membrane proteins into the cytoplasmic membrane. Binds to the hydrophobic signal sequence of the ribosome-nascent chain (RNC) as it emerges from the ribosomes. The SRP-RNC complex is then targeted to the cytoplasmic membrane where it interacts with the SRP receptor FtsY. The protein is Signal recognition particle 54 kDa protein of Pyrococcus horikoshii (strain ATCC 700860 / DSM 12428 / JCM 9974 / NBRC 100139 / OT-3).